We begin with the raw amino-acid sequence, 150 residues long: Arginine repressor (150 aa).

This sequence belongs to the ArgR family.

The protein resides in the cytoplasm. It participates in amino-acid biosynthesis; L-arginine biosynthesis [regulation]. In terms of biological role, regulates arginine biosynthesis genes. This is Arginine repressor from Clostridium botulinum (strain ATCC 19397 / Type A).